The primary structure comprises 32 residues: GILSSFKGVAKGVAKDLAGKLLETLKCKITGC.

An intrachain disulfide couples cysteine 27 to cysteine 32.

Expressed by the skin glands.

It localises to the secreted. The protein localises to the target cell membrane. Functionally, antibacterial peptide with amphipathic alpha-helical structure. Active against E.coli ATCC 25726 (MIC=4-5 uM) and S.aureus ATCC 25923 (MIC=8-10 uM). Has a weak hemolytic activity on human erythrocytes (LC(50)=150-160 uM). This chain is Ranatuerin-2CSa, found in Rana cascadae (Cascades frog).